The following is a 461-amino-acid chain: Kynurenine 3-monooxygenase (461 aa).

Transmembrane regions (helical) follow at residues 395–415 (GFMNAIFPKSWIPLYSMVTFT) and 432–452 (ILSNLWKTTSTLALIGAAIGI).

It belongs to the aromatic-ring hydroxylase family. KMO subfamily. The cofactor is FAD.

Its subcellular location is the mitochondrion. It is found in the membrane. The enzyme catalyses L-kynurenine + NADPH + O2 + H(+) = 3-hydroxy-L-kynurenine + NADP(+) + H2O. The protein operates within cofactor biosynthesis; NAD(+) biosynthesis; quinolinate from L-kynurenine: step 1/3. Catalyzes the hydroxylation of L-kynurenine (L-Kyn) to form 3-hydroxy-L-kynurenine (L-3OHKyn). Required for synthesis of quinolinic acid. This is Kynurenine 3-monooxygenase from Caenorhabditis briggsae.